Consider the following 387-residue polypeptide: Glutamyl-tRNA reductase 1 (387 aa).

Residues Thr-45–Arg-48, Ser-96, Glu-101–Asp-103, and Gln-107 contribute to the substrate site. The active-site Nucleophile is Cys-46. Gly-175 to Gly-180 provides a ligand contact to NADP(+).

The protein belongs to the glutamyl-tRNA reductase family. As to quaternary structure, homodimer.

The enzyme catalyses (S)-4-amino-5-oxopentanoate + tRNA(Glu) + NADP(+) = L-glutamyl-tRNA(Glu) + NADPH + H(+). Its pathway is porphyrin-containing compound metabolism; protoporphyrin-IX biosynthesis; 5-aminolevulinate from L-glutamyl-tRNA(Glu): step 1/2. Functionally, catalyzes the NADPH-dependent reduction of glutamyl-tRNA(Glu) to glutamate 1-semialdehyde (GSA). This chain is Glutamyl-tRNA reductase 1, found in Pyrobaculum arsenaticum (strain DSM 13514 / JCM 11321 / PZ6).